The sequence spans 555 residues: MKALKGSWAILLAIFFALVYLIPLNGRLLWQPDETRYAEISREMLQRGDWVVPHLLGLRYFEKPVAGYWFNNISQWLFGDTNFAVRFGSVFSTGMTALLVFALAMLMWRNARRASLATLIFLSMVLVFSIGTYSVLDPMISLWLAAAMVSYYLTLKATTAKGKLGGYVLLGLACGMGFMTKGFLALAVPVIAVIPIVIQQRRIKDLLIYGPVAIVVAVLLSLPWALAIAQREPDFWNYFFWVEHIQRFAEDNAQHKAPFWYYVPVLMAAVLPWLALLPGSLLKGWRERVQRPELFFLLSWVMMPLIFFSIAKGKLPTYILPCMAPLALLMAAYAEDCVAALRSKVFKVNAVLNGLFGLICILALVVLGSGLLPKVHLFTAQEWPKIVIGIIAFAGWLLFAVVSVRNNAQRWSWAAACPLLLCLLIGYAIPQQVTDSKLPQNFIRVNMAELGHSRYVLTDSVGVAAGLAWELKRSDVLMFNQKGEVSYGLEYPDARSHLISDSDFPQWLAQARKQGDVSLVLQLSRGESIDQQKLPKADKVEVMNRLALFWYQQQP.

The next 11 membrane-spanning stretches (helical) occupy residues 6–26 (GSWAILLAIFFALVYLIPLNG), 87–107 (FGSVFSTGMTALLVFALAMLM), 116–136 (LATLIFLSMVLVFSIGTYSVL), 178–198 (FMTKGFLALAVPVIAVIPIVI), 206–226 (LLIYGPVAIVVAVLLSLPWAL), 257–277 (APFWYYVPVLMAAVLPWLALL), 293–313 (ELFFLLSWVMMPLIFFSIAKG), 315–335 (LPTYILPCMAPLALLMAAYAE), 351–371 (VLNGLFGLICILALVVLGSGL), 384–404 (PKIVIGIIAFAGWLLFAVVSV), and 411–431 (WSWAAACPLLLCLLIGYAIPQ).

It belongs to the glycosyltransferase 83 family.

Its subcellular location is the cell inner membrane. The enzyme catalyses 4-amino-4-deoxy-alpha-L-arabinopyranosyl di-trans,octa-cis-undecaprenyl phosphate + lipid IVA = lipid IIA + di-trans,octa-cis-undecaprenyl phosphate.. It participates in lipopolysaccharide metabolism; 4-amino-4-deoxy-beta-L-arabinose-lipid A biosynthesis. Its function is as follows. Catalyzes the transfer of the L-Ara4N moiety of the glycolipid undecaprenyl phosphate-alpha-L-Ara4N to lipid A. The modified arabinose is attached to lipid A and is required for resistance to polymyxin and cationic antimicrobial peptides. The sequence is that of Undecaprenyl phosphate-alpha-4-amino-4-deoxy-L-arabinose arabinosyl transferase from Serratia proteamaculans (strain 568).